Reading from the N-terminus, the 434-residue chain is Putative D-alanyl-D-alanine carboxypeptidase (434 aa).

Residues 7-25 (YLSLLAVSCSVSAAKYPVL) traverse the membrane as a helical; Signal-anchor segment.

The protein belongs to the peptidase S12 family. YfeW subfamily.

It is found in the cell inner membrane. The catalysed reaction is Preferential cleavage: (Ac)2-L-Lys-D-Ala-|-D-Ala. Also transpeptidation of peptidyl-alanyl moieties that are N-acyl substituents of D-alanine.. In terms of biological role, penicillin-binding protein. Has low DD-carboxypeptidase activity. This is Putative D-alanyl-D-alanine carboxypeptidase from Escherichia coli (strain K12).